A 111-amino-acid chain; its full sequence is Exocrine gland-secreted peptide 22 (111 aa).

The N-terminal stretch at 1 to 24 is a signal peptide; sequence MNSVPVMLFSISILLAAMLTEGRG.

The protein belongs to the exocrine gland-secreted peptide family. As to expression, expressed in acinar cells of the lacrimal gland from where it is secreted into tears. Not detected in a range of other tissues tested including other exocrine glands, internal organs and sensory epithelia.

Its subcellular location is the secreted. Its function is as follows. Pheromone produced by juveniles which activates a small number of vomeronasal organ sensory neurons and exhibits a powerful inhibitory effect on adult male mating behavior. The chain is Exocrine gland-secreted peptide 22 from Mus musculus (Mouse).